Reading from the N-terminus, the 563-residue chain is Chitinase A (563 aa).

Positions 1–23 are cleaved as a signal peptide; sequence MRKFNKPLLALLIGSTLCSAAQA. The region spanning 158–559 is the GH18 domain; the sequence is KVVGSYFVEW…NSMNASLGNS (402 aa). Residue glutamate 315 is the Proton donor of the active site.

This sequence belongs to the glycosyl hydrolase 18 family. Chitinase class II subfamily.

The catalysed reaction is Random endo-hydrolysis of N-acetyl-beta-D-glucosaminide (1-&gt;4)-beta-linkages in chitin and chitodextrins.. The sequence is that of Chitinase A (chiA) from Serratia marcescens.